Consider the following 93-residue polypeptide: Pyrimidine/purine nucleoside phosphorylase (93 aa).

The protein belongs to the nucleoside phosphorylase PpnP family.

It catalyses the reaction a purine D-ribonucleoside + phosphate = a purine nucleobase + alpha-D-ribose 1-phosphate. The catalysed reaction is adenosine + phosphate = alpha-D-ribose 1-phosphate + adenine. The enzyme catalyses cytidine + phosphate = cytosine + alpha-D-ribose 1-phosphate. It carries out the reaction guanosine + phosphate = alpha-D-ribose 1-phosphate + guanine. It catalyses the reaction inosine + phosphate = alpha-D-ribose 1-phosphate + hypoxanthine. The catalysed reaction is thymidine + phosphate = 2-deoxy-alpha-D-ribose 1-phosphate + thymine. The enzyme catalyses uridine + phosphate = alpha-D-ribose 1-phosphate + uracil. It carries out the reaction xanthosine + phosphate = alpha-D-ribose 1-phosphate + xanthine. Its function is as follows. Catalyzes the phosphorolysis of diverse nucleosides, yielding D-ribose 1-phosphate and the respective free bases. Can use uridine, adenosine, guanosine, cytidine, thymidine, inosine and xanthosine as substrates. Also catalyzes the reverse reactions. The chain is Pyrimidine/purine nucleoside phosphorylase from Pseudoalteromonas atlantica (strain T6c / ATCC BAA-1087).